We begin with the raw amino-acid sequence, 363 residues long: UDP-N-acetylglucosamine--N-acetylmuramyl-(pentapeptide) pyrophosphoryl-undecaprenol N-acetylglucosamine transferase (363 aa).

UDP-N-acetyl-alpha-D-glucosamine is bound by residues 10–12 (TGG), Asn124, Ser195, Ile249, and Gln294.

Belongs to the glycosyltransferase 28 family. MurG subfamily.

It is found in the cell membrane. It catalyses the reaction Mur2Ac(oyl-L-Ala-gamma-D-Glu-L-Lys-D-Ala-D-Ala)-di-trans,octa-cis-undecaprenyl diphosphate + UDP-N-acetyl-alpha-D-glucosamine = beta-D-GlcNAc-(1-&gt;4)-Mur2Ac(oyl-L-Ala-gamma-D-Glu-L-Lys-D-Ala-D-Ala)-di-trans,octa-cis-undecaprenyl diphosphate + UDP + H(+). Its pathway is cell wall biogenesis; peptidoglycan biosynthesis. In terms of biological role, cell wall formation. Catalyzes the transfer of a GlcNAc subunit on undecaprenyl-pyrophosphoryl-MurNAc-pentapeptide (lipid intermediate I) to form undecaprenyl-pyrophosphoryl-MurNAc-(pentapeptide)GlcNAc (lipid intermediate II). The polypeptide is UDP-N-acetylglucosamine--N-acetylmuramyl-(pentapeptide) pyrophosphoryl-undecaprenol N-acetylglucosamine transferase (Leuconostoc mesenteroides subsp. mesenteroides (strain ATCC 8293 / DSM 20343 / BCRC 11652 / CCM 1803 / JCM 6124 / NCDO 523 / NBRC 100496 / NCIMB 8023 / NCTC 12954 / NRRL B-1118 / 37Y)).